A 592-amino-acid polypeptide reads, in one-letter code: Hepatocyte nuclear factor 1-alpha-B (592 aa).

The interval 1-31 (MASQLSYLQQELLRALLESGVTKEALKKALA) is dimerization. An HNF-p1 domain is found at 1–32 (MASQLSYLQQELLRALLESGVTKEALKKALAD). Residues 54–78 (NCVQLPNGLGEPQMSEDESSDDGGD) form a disordered region. Over residues 67–77 (MSEDESSDDGG) the composition is skewed to acidic residues. A POU-specific atypical domain is found at 85–180 (KELERLSPEE…IARQFTHAGH (96 aa)). 6 interaction with DNA regions span residues 128–130 (QRE), 141–147 (HLSQHLN), 153–156 (KTQK), 201–204 (RFKW), 261–263 (RVY), and 268–271 (NSGK). Residues 195-203 (KKMRRNRFK) carry the Nuclear localization signal motif. Positions 197-277 (MRRNRFKWGP…NSGKEEAFRH (81 aa)) form a DNA-binding region, homeobox; HNF1-type. 2 stretches are compositionally biased toward polar residues: residues 284–295 (YNGQQSSAQPLS) and 306–328 (RYTQ…TLSP). 2 disordered regions span residues 284-329 (YNGQ…LSPS) and 511-533 (KQVV…HNQD).

The protein belongs to the HNF1 homeobox family. In terms of assembly, binds DNA as dimer. Forms a homodimer or heterodimer with HNF1-alpha-A. Potentially also form a heterodimer with HNF1-beta. In terms of tissue distribution, liver.

It localises to the nucleus. Functionally, transcriptional activator that regulates the tissue specific expression of multiple genes, especially in pancreas and liver. Binds to the hepatocyte specific promoter element HP1. Binds to the inverted palindrome 5'-GTTAATNATTAAC-3'. This chain is Hepatocyte nuclear factor 1-alpha-B (hnf1a-b), found in Xenopus laevis (African clawed frog).